Here is a 346-residue protein sequence, read N- to C-terminus: Short-chain dehydrogenase/reductase bet4 (346 aa).

Residues 1–35 (MTPAKAPSHAKKPEAGSQPISSMWTQMFPPKPTYT) form a disordered region. Positions 56, 80, 105, and 132 each coordinate NADP(+). Catalysis depends on S191, which acts as the Proton donor. Residues Y222 and K226 each coordinate NADP(+). Residue Y222 is the Proton acceptor of the active site. K226 functions as the Lowers pKa of active site Tyr in the catalytic mechanism.

It belongs to the short-chain dehydrogenases/reductases (SDR) family.

It catalyses the reaction dehydroprobetaenone I + AH2 = probetaenone I + A. Its pathway is mycotoxin biosynthesis. Its function is as follows. Short-chain dehydrogenase/reductase; part of the gene cluster that mediates the biosynthesis of betaenones, phytotoxic polyketides involved in leaf spot disease in sugar beets. The first step of the pathway is the synthesis of dehydroprobetaenone I by the polyketide synthase bet1 and the enoyl reductase bet3 via condensation of one acetyl-CoA starter unit with 7 malonyl-CoA units and 5 methylations. The C-terminal reductase (R) domain of bet1 catalyzes the reductive release of the polyketide chain. Because bet1 lacks a designated enoylreductase (ER) domain, the required activity is provided the enoyl reductase bet3. The short-chain dehydrogenase/reductase bet4 then catalyzes reduction of dehydroprobetaenone I to probetaenone I. The cytochrome P450 monooxygenase bet2 catalyzes successive epoxidation, oxidation (resulting from epoxide opening) and hydroxylation to install a tertiary alcohol in the decaline ring to yield betaenone C from dehydroprobetaenone I and betaenone B from probetaenone I. The FAD-linked oxidoreductase (orf1) is probably responsible for the conversion of betaenone C to betaenone A via an intramolecular aldol reaction between C-1 and C-17 to form the bridged tricyclic system in betaenone A. The chain is Short-chain dehydrogenase/reductase bet4 from Neocamarosporium betae (Beet black rot fungus).